The sequence spans 104 residues: NADH-ubiquinone oxidoreductase 12 kDa subunit, mitochondrial (104 aa).

This sequence belongs to the complex I NDUFS6 subunit family. In terms of assembly, complex I is composed of about 40 different subunits.

It is found in the mitochondrion inner membrane. Accessory subunit of the mitochondrial membrane respiratory chain NADH dehydrogenase (Complex I), that is believed not to be involved in catalysis. Complex I functions in the transfer of electrons from NADH to the respiratory chain. The immediate electron acceptor for the enzyme is believed to be ubiquinone. The chain is NADH-ubiquinone oxidoreductase 12 kDa subunit, mitochondrial (nuo-12.3) from Neurospora crassa (strain ATCC 24698 / 74-OR23-1A / CBS 708.71 / DSM 1257 / FGSC 987).